Reading from the N-terminus, the 328-residue chain is Trans-O-hydroxybenzylidenepyruvate hydratase-aldolase (328 aa).

Belongs to the DapA family. As to quaternary structure, homotrimer.

The catalysed reaction is (3E)-4-(2-hydroxyphenyl)-2-oxobut-3-enoate + H2O = salicylaldehyde + pyruvate. The protein operates within aromatic compound metabolism; naphthalene degradation. With respect to regulation, inhibited bye p-chloromercuribenzoate and salicylaldehyde. Activated by salicylate. Its function is as follows. Involved in the naphthalene and naphthalenesulfonate catabolic pathway. Catalyzes the transformation of trans-O-hydroxybenzylidenepyruvate (THBPA) to salicylaldehyde and pyruvate. The reaction is reversible. Can also use 2,4-dihydroxybenzalpyruvate (2,4-DHBP) and 2,6-dihydroxybenzalpyruvate (2,6-DHBP). The polypeptide is Trans-O-hydroxybenzylidenepyruvate hydratase-aldolase (nsaE) (Sphingobium xenophagum).